A 663-amino-acid chain; its full sequence is Methionine--tRNA ligase (663 aa).

Residues 10–20 (AYTNGPLHLGH) carry the 'HIGH' region motif. Residues C142, C145, C154, and C157 each contribute to the Zn(2+) site. Residues 323–327 (KMSTS) carry the 'KMSKS' region motif. ATP is bound at residue T326. In terms of domain architecture, tRNA-binding spans 563–663 (YFGNIDLRVG…RDLPVGSKIH (101 aa)).

It belongs to the class-I aminoacyl-tRNA synthetase family. MetG type 1 subfamily. Homodimer. Requires Zn(2+) as cofactor.

The protein resides in the cytoplasm. It catalyses the reaction tRNA(Met) + L-methionine + ATP = L-methionyl-tRNA(Met) + AMP + diphosphate. In terms of biological role, is required not only for elongation of protein synthesis but also for the initiation of all mRNA translation through initiator tRNA(fMet) aminoacylation. The sequence is that of Methionine--tRNA ligase from Methanococcus maripaludis (strain C5 / ATCC BAA-1333).